Reading from the N-terminus, the 259-residue chain is UPF0246 protein PSPA7_1607 (259 aa).

This sequence belongs to the UPF0246 family.

The protein is UPF0246 protein PSPA7_1607 of Pseudomonas paraeruginosa (strain DSM 24068 / PA7) (Pseudomonas aeruginosa (strain PA7)).